Consider the following 762-residue polypeptide: 5-methyltetrahydropteroyltriglutamate--homocysteine methyltransferase (762 aa).

5-methyltetrahydropteroyltri-L-glutamate contacts are provided by residues 17 to 20 (REWK) and Lys-111. Residues 435 to 437 (IGS) and Glu-488 contribute to the L-homocysteine site. Residues 435–437 (IGS) and Glu-488 each bind L-methionine. Residues 519-520 (RC) and Trp-565 contribute to the 5-methyltetrahydropteroyltri-L-glutamate site. An L-homocysteine-binding site is contributed by Asp-603. Asp-603 contributes to the L-methionine binding site. A 5-methyltetrahydropteroyltri-L-glutamate-binding site is contributed by Glu-609. Zn(2+)-binding residues include His-645, Cys-647, and Glu-669. His-698 acts as the Proton donor in catalysis. Zn(2+) is bound at residue Cys-730.

It belongs to the vitamin-B12 independent methionine synthase family. It depends on Zn(2+) as a cofactor.

It carries out the reaction 5-methyltetrahydropteroyltri-L-glutamate + L-homocysteine = tetrahydropteroyltri-L-glutamate + L-methionine. The protein operates within amino-acid biosynthesis; L-methionine biosynthesis via de novo pathway; L-methionine from L-homocysteine (MetE route): step 1/1. Catalyzes the transfer of a methyl group from 5-methyltetrahydrofolate to homocysteine resulting in methionine formation. The chain is 5-methyltetrahydropteroyltriglutamate--homocysteine methyltransferase from Bacillus cereus (strain AH187).